Consider the following 744-residue polypeptide: Merozoite surface protein 9 (744 aa).

The N-terminal stretch at 1-23 (MMNMKIVLFSLLLFVIRWNIISC) is a signal peptide. The interval 77-235 (KELLKEKQYT…VNDEDDVNDE (159 aa)) is interaction with MSP1 and host SLC4A1/Band 3. Disordered stretches follow at residues 202-282 (KSQG…ATAY), 459-487 (DNQA…PTED), 512-540 (NNTP…ENFD), and 666-744 (VDAL…EESK). Residues 211-224 (SQNQNENNDNQKYQ) are compositionally biased toward polar residues. 8 tandem repeats follow at residues 226–231 (VNDEDD), 232–237 (VNDEED), 238–243 (TNDDED), 244–249 (TNDEED), 250–255 (TNDDED), 256–261 (TNDDED), 262–267 (TNDEED), and 268–273 (TNDEED). Residues 226 to 273 (VNDEDDVNDEEDTNDDEDTNDEEDTNDDEDTNDDEDTNDEEDTNDEED) form an 8 X 6 AA tandem repeats of [VT]-N-D-[ED]-[ED]-D region. The segment covering 226–274 (VNDEDDVNDEEDTNDDEDTNDEEDTNDDEDTNDDEDTNDEEDTNDEEDH) has biased composition (acidic residues). The segment at 364-528 (LKDNLINYEF…PPTQSKKKNK (165 aa)) is interaction with MSP1 and host SLC4A1/Band 3. The segment covering 459 to 473 (DNQAVDTKSMEEPKV) has biased composition (basic and acidic residues). Residues 512-521 (NNTPNVVPPT) are compositionally biased toward low complexity. Residues 644–734 (NQETEEEMEK…QEEEEEEEIV (91 aa)) are a coiled coil. Basic and acidic residues-rich tracts occupy residues 672–698 (KNKE…KEKE) and 706–719 (EKEK…KEEK). Residues 720–734 (EKEEEQEEEEEEEIV) show a composition bias toward acidic residues.

The protein belongs to the plasmodium ABRA family. Forms a complex composed of MSP1, MSP6, MSP7, MSP9 and MSP3; within the complex, MSP6 and MSP9 mediate the binding to the host erythrocyte. Interacts with MSP1 subunits p19 and p42; the interaction is direct. Interacts with host SLC4A1/Band 3 protein (via the 5ABC region). MSP1 subunits p19 or p42, and MSP9 form a co-ligand complex that interacts with host SLC4A1/Band 3 protein. In terms of processing, not glycosylated.

The protein localises to the cell membrane. It localises to the parasitophorous vacuole lumen. Its subcellular location is the secreted. During the asexual blood stage, involved in the sialic acid-independent (SAID) merozoite invasion of host erythrocytes by binding to host SLC4A1/Band 3 protein on the surface of the host erythrocyte. In Plasmodium falciparum (isolate 7G8), this protein is Merozoite surface protein 9.